We begin with the raw amino-acid sequence, 545 residues long: MSGRAPFIKPVLEYNEHGWGPCEELSVDVPYQPFCKSDRVGKISDWTAPPTERKFANKYVSSFGNSNQYAYFHEDDESTYHLVDTSGFKGFRPFQRGRFRGNIRNNPRTRGRTGRGGAVTGIGGNQPGVGVNERTKYGKGRDNRRQMGRRFGRNAPTRMRESSVVVRSDWVSIEEIDFPRLLKLSLPNVKEGQDVVTCGSLEYYDKTYDRINVKNERPLLKTDRIIHTLTTTDDPVIRRLSKTIGNIFATDEILATIMCCTRSNYSWDVVFDKVGNKIFLDKRDNAQFDLLTVNETALEPPLDEEGSINSPHSLAMEATLINHNFCQQVLRGGDQKKYQFEEPYPLEESGVDLVSIGYRYKQWDLGNNIILIARCKHNGVLQGPNGEVQFLSIRALNEWDSKASNSLEWRQKLDTQHGAVLASELRNNACKLARWTVESVLSGSDQLKLGYVSRVIPRDHLRHVILRTQQFKPQEFSTQINLSMDNAWGILRCLIDIVMKQPDGKYLLMKDPNKPMVRLYDVPENAFESSDEDDLSDDKLFLLSN.

Basic residues predominate over residues 99–113 (FRGNIRNNPRTRGRT). Residues 99 to 158 (FRGNIRNNPRTRGRTGRGGAVTGIGGNQPGVGVNERTKYGKGRDNRRQMGRRFGRNAPTR) form a disordered region. Positions 114–127 (GRGGAVTGIGGNQP) are enriched in gly residues. The span at 133–145 (ERTKYGKGRDNRR) shows a compositional bias: basic and acidic residues. Residues 287–301 (QFDLLTVNETALEPP) form an RNA gate region.

This sequence belongs to the eIF-3 subunit D family. In terms of assembly, component of the eukaryotic translation initiation factor 3 (eIF-3) complex. The eIF-3 complex interacts with pix.

It localises to the cytoplasm. Its function is as follows. mRNA cap-binding component of the eukaryotic translation initiation factor 3 (eIF-3) complex, which is involved in protein synthesis of a specialized repertoire of mRNAs and, together with other initiation factors, stimulates binding of mRNA and methionyl-tRNAi to the 40S ribosome. The eIF-3 complex specifically targets and initiates translation of a subset of mRNAs involved in cell proliferation. In the eIF-3 complex, eif3d specifically recognizes and binds the 7-methylguanosine cap of a subset of mRNAs. This chain is Eukaryotic translation initiation factor 3 subunit D-2, found in Drosophila persimilis (Fruit fly).